A 131-amino-acid chain; its full sequence is Small ribosomal subunit protein uS8c (131 aa).

It belongs to the universal ribosomal protein uS8 family. Part of the 30S ribosomal subunit.

The protein resides in the plastid. It is found in the chloroplast. Its function is as follows. One of the primary rRNA binding proteins, it binds directly to 16S rRNA central domain where it helps coordinate assembly of the platform of the 30S subunit. This Tupiella akineta (Green alga) protein is Small ribosomal subunit protein uS8c (rps8).